Reading from the N-terminus, the 367-residue chain is MADGFATAPQDFKGVFTPEIEAQTAPVWEKVKHHVTPMEWRVQAPLIVEINRLKREKNAAILAHNYMTPDIFHGVGDFVGDSLALAKEAAKSDAQIIVQAGVHFMAETSKVLSPEKKILIPDLKAGCSLASSITGADVRLIKQRYPGVPVVTYVNTTADVKAETDICCTSANAVQVVEWAAKEWGTDKVILIPDEFLARNVARQTDVKIIAWAGHCEVHKRFTAQDIADMRAAWPGAEVLAHPECPAEILEAADFAGSTAAMNDYVAAKKPAQVVLITECSMASNVQAESPATQFIGPCNMCPHMKRITLQNIYDALVHEQYEVTVDAEVLDRARLAVQRMIDLPPPAVPARYDLVKARHHVDVELI.

Positions 64 and 82 each coordinate iminosuccinate. Cys127 serves as a coordination point for [4Fe-4S] cluster. Iminosuccinate-binding positions include 153 to 155 and Ser170; that span reads YVN. Residue Cys216 participates in [4Fe-4S] cluster binding. Residues 242–244 and Thr259 each bind iminosuccinate; that span reads HPE. Cys302 contributes to the [4Fe-4S] cluster binding site.

This sequence belongs to the quinolinate synthase family. Type 2 subfamily. [4Fe-4S] cluster is required as a cofactor.

It is found in the cytoplasm. The catalysed reaction is iminosuccinate + dihydroxyacetone phosphate = quinolinate + phosphate + 2 H2O + H(+). Its pathway is cofactor biosynthesis; NAD(+) biosynthesis; quinolinate from iminoaspartate: step 1/1. Functionally, catalyzes the condensation of iminoaspartate with dihydroxyacetone phosphate to form quinolinate. This chain is Quinolinate synthase, found in Caulobacter vibrioides (strain ATCC 19089 / CIP 103742 / CB 15) (Caulobacter crescentus).